The following is a 158-amino-acid chain: MKKVPIKVCVSNKQKDVPIRVQSAKKLVLCCLQYWKITTDQVYIYFLDDKALAQIHDEVFSDPSLTDTITLPIDSPGISSHPHVLGEAFISPKAAIRFLKDRSQDSDLLYEEISRYVVHSLLHMLGYDDQTPEERKKMRVKENQALCMLREKHALLSD.

Zn(2+) is bound by residues His-119, His-123, and Asp-129.

It belongs to the endoribonuclease YbeY family. It depends on Zn(2+) as a cofactor.

Its subcellular location is the cytoplasm. Functionally, single strand-specific metallo-endoribonuclease involved in late-stage 70S ribosome quality control and in maturation of the 3' terminus of the 16S rRNA. This Chlamydia felis (strain Fe/C-56) (Chlamydophila felis) protein is Endoribonuclease YbeY.